The primary structure comprises 123 residues: Chaperone protein SycN (123 aa).

Interacts with YscB to form a complex which specifically binds to YopN.

It localises to the cytoplasm. The protein resides in the cell inner membrane. Functions as a specific chaperone for YopN. It could facilitate the secretion and the subsequent translocation of YopN. The protein is Chaperone protein SycN (sycN) of Yersinia pseudotuberculosis serotype I (strain IP32953).